The chain runs to 331 residues: MLSFQATVRPLAVSSRLHSPAAHIWRRNAHTAAMSDDSLDQGSSSSYGDSASQPHLGKGKGRQDSLAQSYRFPEKGMNGGPPDPFEVMALDRSATQQEVKQQYYKLALLLHPDSSHPSSSPDHFATLNKAYNLLSKQSSRSAFLKTGYGWDVSTSSGGNQTWSDSLMRAEIARRRNGGAAAWNGASRRYRDSDAGRGAWGGFDGSQGWRPYEDPSKGFSPPTSGPAEERYMSNPRFLAVVGVASAVIAWVHWHRLGYAAETHRDMLDKQNIDASRALAQARYEAATHGHIRREQIRRRVREAEVLKELEKADQGHIAVAGPPTAYPPSHRE.

The N-terminal 36 residues, 1–36 (MLSFQATVRPLAVSSRLHSPAAHIWRRNAHTAAMSD), are a transit peptide targeting the mitochondrion. Positions 35–66 (SDDSLDQGSSSSYGDSASQPHLGKGKGRQDSL) are disordered. The segment covering 40–53 (DQGSSSSYGDSASQ) has biased composition (low complexity). The 65-residue stretch at 83 to 147 (DPFEVMALDR…SSRSAFLKTG (65 aa)) folds into the J domain. The interval 203-226 (DGSQGWRPYEDPSKGFSPPTSGPA) is disordered. The IQ domain occupies 275–303 (RALAQARYEAATHGHIRREQIRRRVREAE).

It belongs to the DnaJ family. Interacts with QCR2.

It localises to the mitochondrion. In terms of biological role, mitochondrial co-chaperone required for ubiquinol-cytochrome c oxidoreductase (mitochondrial respiratory chain complex III) activity. The chain is Mitochondrial respiration co-chaperone MRJ1 from Cryptococcus neoformans var. grubii serotype A (strain H99 / ATCC 208821 / CBS 10515 / FGSC 9487) (Filobasidiella neoformans var. grubii).